A 685-amino-acid polypeptide reads, in one-letter code: Potassium-transporting ATPase ATP-binding subunit (685 aa).

The next 4 membrane-spanning stretches (helical) occupy residues 36–56 (MFVV…PSIF), 68–88 (LIVT…ESVA), 218–238 (IALN…LVAL), and 255–275 (IALL…AIGI). Catalysis depends on Asp-306, which acts as the 4-aspartylphosphate intermediate. ATP-binding positions include Asp-343, Glu-347, 375–382 (FTAQTRMS), and Lys-394. Asp-517 and Asp-521 together coordinate Mg(2+). Helical transmembrane passes span 587–607 (FAII…MNIM), 615–635 (AILS…PIAM), and 654–674 (IVFG…IDMI).

The protein belongs to the cation transport ATPase (P-type) (TC 3.A.3) family. Type IA subfamily. As to quaternary structure, the system is composed of three essential subunits: KdpA, KdpB and KdpC.

Its subcellular location is the cell membrane. The catalysed reaction is K(+)(out) + ATP + H2O = K(+)(in) + ADP + phosphate + H(+). Its function is as follows. Part of the high-affinity ATP-driven potassium transport (or Kdp) system, which catalyzes the hydrolysis of ATP coupled with the electrogenic transport of potassium into the cytoplasm. This subunit is responsible for energy coupling to the transport system and for the release of the potassium ions to the cytoplasm. The chain is Potassium-transporting ATPase ATP-binding subunit from Clostridium acetobutylicum (strain ATCC 824 / DSM 792 / JCM 1419 / IAM 19013 / LMG 5710 / NBRC 13948 / NRRL B-527 / VKM B-1787 / 2291 / W).